The sequence spans 535 residues: CTP synthase (535 aa).

Positions 1–267 (MTKYIFVTGG…DQIVCDHLKL (267 aa)) are amidoligase domain. Ser-13 contributes to the CTP binding site. A UTP-binding site is contributed by Ser-13. ATP is bound at residue 14–19 (SLGKGI). Tyr-54 provides a ligand contact to L-glutamine. Asp-71 serves as a coordination point for ATP. Mg(2+)-binding residues include Asp-71 and Glu-141. CTP-binding positions include 148–150 (DIE), 188–193 (KTKPTQ), and Lys-224. UTP-binding positions include 188-193 (KTKPTQ) and Lys-224. 240–242 (RDA) is an ATP binding site. A Glutamine amidotransferase type-1 domain is found at 292–534 (KIALVGKYVE…VRASITNKES (243 aa)). Gly-354 lines the L-glutamine pocket. The Nucleophile; for glutamine hydrolysis role is filled by Cys-381. L-glutamine-binding positions include 382–385 (LGMQ), Glu-405, and Arg-462. Residues His-507 and Glu-509 contribute to the active site.

The protein belongs to the CTP synthase family. In terms of assembly, homotetramer.

It catalyses the reaction UTP + L-glutamine + ATP + H2O = CTP + L-glutamate + ADP + phosphate + 2 H(+). The enzyme catalyses L-glutamine + H2O = L-glutamate + NH4(+). The catalysed reaction is UTP + NH4(+) + ATP = CTP + ADP + phosphate + 2 H(+). Its pathway is pyrimidine metabolism; CTP biosynthesis via de novo pathway; CTP from UDP: step 2/2. With respect to regulation, allosterically activated by GTP, when glutamine is the substrate; GTP has no effect on the reaction when ammonia is the substrate. The allosteric effector GTP functions by stabilizing the protein conformation that binds the tetrahedral intermediate(s) formed during glutamine hydrolysis. Inhibited by the product CTP, via allosteric rather than competitive inhibition. Catalyzes the ATP-dependent amination of UTP to CTP with either L-glutamine or ammonia as the source of nitrogen. Regulates intracellular CTP levels through interactions with the four ribonucleotide triphosphates. In Bacillus cereus (strain ATCC 10987 / NRS 248), this protein is CTP synthase.